The primary structure comprises 222 residues: Small ribosomal subunit protein uS7m (222 aa).

This sequence belongs to the universal ribosomal protein uS7 family. Part of the small ribosomal subunit.

The protein resides in the mitochondrion. Functionally, one of the primary rRNA binding proteins, it binds directly to 18S rRNA where it nucleates assembly of the head domain of the small subunit. The chain is Small ribosomal subunit protein uS7m (RPS7) from Prototheca wickerhamii.